A 154-amino-acid polypeptide reads, in one-letter code: MTIEVQENREPKIIEVTEIMKMLPHRYPFLLVDRVIDFEEGKWLKAIKNVTVNEPCFTGHFPESPIFPGVLILEAMAQATGVLAVATHGKMAQDELYYFAAIDNARFKRPVVPGDQLTFEVEFLKEMRGITKFTGKAFVDGKLVCEADLMCARK.

His60 is an active-site residue.

This sequence belongs to the thioester dehydratase family. FabZ subfamily.

It localises to the cytoplasm. The catalysed reaction is a (3R)-hydroxyacyl-[ACP] = a (2E)-enoyl-[ACP] + H2O. Its function is as follows. Involved in unsaturated fatty acids biosynthesis. Catalyzes the dehydration of short chain beta-hydroxyacyl-ACPs and long chain saturated and unsaturated beta-hydroxyacyl-ACPs. This chain is 3-hydroxyacyl-[acyl-carrier-protein] dehydratase FabZ, found in Actinobacillus pleuropneumoniae serotype 5b (strain L20).